The primary structure comprises 472 residues: Regulator of G-protein signaling 6 (472 aa).

Positions 40-115 (KTGGVPIRTV…DDGTFYRFQA (76 aa)) constitute a DEP domain. One can recognise a G protein gamma domain in the interval 261–330 (IRKQITFLNA…MSKEPSQQRV (70 aa)). Residues 336–441 (SFDEILKDQV…LMKSDSYARF (106 aa)) form the RGS domain.

Interacts with GNB5. Interacts with RGS7BP, leading to regulate the subcellular location of the heterodimer formed with GNB5. Interacts with GNAI1.

The protein resides in the cytoplasm. It is found in the cytosol. The protein localises to the membrane. Its subcellular location is the nucleus. It localises to the cell membrane. Its function is as follows. Regulates G protein-coupled receptor signaling cascades. Inhibits signal transduction by increasing the GTPase activity of G protein alpha subunits, thereby driving them into their inactive GDP-bound form. The RGS6/GNB5 dimer enhances GNAO1 GTPase activity. The chain is Regulator of G-protein signaling 6 (RGS6) from Homo sapiens (Human).